A 414-amino-acid chain; its full sequence is tRNA methyltransferase 10 homolog C (414 aa).

Residues Met-1–Tyr-35 constitute a mitochondrion transit peptide. At Ser-79 the chain carries Phosphoserine. Residues Gly-133 to Glu-162 adopt a coiled-coil conformation. The 193-residue stretch at Leu-186–Gly-378 folds into the SAM-dependent MTase TRM10-type domain.

Belongs to the class IV-like SAM-binding methyltransferase superfamily. TRM10 family. Component of mitochondrial ribonuclease P, a complex composed of TRMT10C/MRPP1, HSD17B10/MRPP2 and PRORP/MRPP3. Interacts with HSD17B10/MRPP2; forming the MRPP1-MRPP2 subcomplex of the mitochondrial ribonuclease P complex. Interacts with GRSF1.

Its subcellular location is the mitochondrion matrix. The protein resides in the mitochondrion nucleoid. It carries out the reaction adenosine(9) in tRNA + S-adenosyl-L-methionine = N(1)-methyladenosine(9) in tRNA + S-adenosyl-L-homocysteine + H(+). The enzyme catalyses guanosine(9) in tRNA + S-adenosyl-L-methionine = N(1)-methylguanosine(9) in tRNA + S-adenosyl-L-homocysteine + H(+). The catalysed reaction is an adenosine in mRNA + S-adenosyl-L-methionine = an N(1)-methyladenosine in mRNA + S-adenosyl-L-homocysteine + H(+). Its function is as follows. Mitochondrial tRNA N(1)-methyltransferase involved in mitochondrial tRNA maturation. Component of mitochondrial ribonuclease P, a complex composed of TRMT10C/MRPP1, HSD17B10/MRPP2 and PRORP/MRPP3, which cleaves tRNA molecules in their 5'-ends. Together with HSD17B10/MRPP2, forms a subcomplex of the mitochondrial ribonuclease P, named MRPP1-MRPP2 subcomplex, which displays functions that are independent of the ribonuclease P activity. The MRPP1-MRPP2 subcomplex catalyzes the formation of N(1)-methylguanine and N(1)-methyladenine at position 9 (m1G9 and m1A9, respectively) in tRNAs; TRMT10C/MRPP1 acting as the catalytic N(1)-methyltransferase subunit. The MRPP1-MRPP2 subcomplex also acts as a tRNA maturation platform: following 5'-end cleavage by the mitochondrial ribonuclease P complex, the MRPP1-MRPP2 subcomplex enhances the efficiency of 3'-processing catalyzed by ELAC2, retains the tRNA product after ELAC2 processing and presents the nascent tRNA to the mitochondrial CCA tRNA nucleotidyltransferase TRNT1 enzyme. In addition to tRNA N(1)-methyltransferase activity, TRMT10C/MRPP1 also acts as a mRNA N(1)-methyltransferase by mediating methylation of adenosine residues at the N(1) position of MT-ND5 mRNA. Associates with mitochondrial DNA complexes at the nucleoids to initiate RNA processing and ribosome assembly. This Rattus norvegicus (Rat) protein is tRNA methyltransferase 10 homolog C.